Consider the following 274-residue polypeptide: Putative pyruvate, phosphate dikinase regulatory protein (274 aa).

153 to 160 (GISRTSKT) serves as a coordination point for ADP.

It belongs to the pyruvate, phosphate/water dikinase regulatory protein family. PDRP subfamily.

The catalysed reaction is N(tele)-phospho-L-histidyl/L-threonyl-[pyruvate, phosphate dikinase] + ADP = N(tele)-phospho-L-histidyl/O-phospho-L-threonyl-[pyruvate, phosphate dikinase] + AMP + H(+). It carries out the reaction N(tele)-phospho-L-histidyl/O-phospho-L-threonyl-[pyruvate, phosphate dikinase] + phosphate + H(+) = N(tele)-phospho-L-histidyl/L-threonyl-[pyruvate, phosphate dikinase] + diphosphate. Bifunctional serine/threonine kinase and phosphorylase involved in the regulation of the pyruvate, phosphate dikinase (PPDK) by catalyzing its phosphorylation/dephosphorylation. In Bartonella henselae (strain ATCC 49882 / DSM 28221 / CCUG 30454 / Houston 1) (Rochalimaea henselae), this protein is Putative pyruvate, phosphate dikinase regulatory protein.